Reading from the N-terminus, the 190-residue chain is Putative manganese efflux pump MntP (190 aa).

The next 6 helical transmembrane spans lie at P3 to G23, L41 to A61, D69 to I89, F105 to G125, I133 to M153, and I168 to A188.

Belongs to the MntP (TC 9.B.29) family.

Its subcellular location is the cell inner membrane. Functionally, probably functions as a manganese efflux pump. In Pseudomonas syringae pv. syringae (strain B728a), this protein is Putative manganese efflux pump MntP.